We begin with the raw amino-acid sequence, 1931 residues long: Chitin synthase 5 (1931 aa).

In terms of domain architecture, Myosin motor spans 11-777 (LGVTDLSSLA…LFRFLEDRLR (767 aa)). 122–129 (GPTGSGKS) serves as a coordination point for ATP. N-linked (GlcNAc...) asparagine glycans are attached at residues Asn510, Asn538, and Asn676. The actin-binding stretch occupies residues 655-677 (VDSLLKSFDQTQTWYIFALRPND). The tract at residues 798 to 817 (DPFSPHRYQPTSFDSQDHVY) is disordered. Asn842 carries an N-linked (GlcNAc...) asparagine glycan. The next 2 helical transmembrane spans lie at 912–932 (WVWLCSILTWWIPGFLLSKIA) and 951–971 (MIIWFICGCAIFVIAILGPVI). 3 N-linked (GlcNAc...) asparagine glycosylation sites follow: Asn1062, Asn1078, and Asn1146. Residues 1220 to 1240 (ILLALSCVMVAVIGFKFLSAL) form a helical membrane-spanning segment. N-linked (GlcNAc...) asparagine glycosylation occurs at Asn1583. 3 helical membrane passes run 1615–1635 (LSTIIAPVTVAYIVYLIYLIV), 1641–1661 (IPTLSIIMLAAIYGLQAMIFI), and 1668–1688 (MIAWMIFYICAIPVFSFLLPL). The segment at 1826–1847 (AHRPSLDDTSSFHQPYQPAPRP) is disordered. In terms of domain architecture, DEK-C spans 1875–1930 (AITDSQLERSIRKICANAELDKLTKKGVRKELEREYGVELTERREAINRLVEKVLT).

It in the N-terminal section; belongs to the TRAFAC class CC myosin-kinesin ATPase superfamily. Myosin family. The protein in the C-terminal section; belongs to the chitin synthase family. Class V subfamily.

The protein localises to the cell membrane. Its subcellular location is the cell septum. It localises to the cell tip. The enzyme catalyses [(1-&gt;4)-N-acetyl-beta-D-glucosaminyl](n) + UDP-N-acetyl-alpha-D-glucosamine = [(1-&gt;4)-N-acetyl-beta-D-glucosaminyl](n+1) + UDP + H(+). Functionally, polymerizes chitin, a structural polymer of the cell wall and septum, by transferring the sugar moiety of UDP-GlcNAc to the non-reducing end of the growing chitin polymer. Produces a large proportion of the chitin that is not deacetylated to chitosan. The sequence is that of Chitin synthase 5 from Cryptococcus neoformans var. grubii serotype A (strain H99 / ATCC 208821 / CBS 10515 / FGSC 9487) (Filobasidiella neoformans var. grubii).